We begin with the raw amino-acid sequence, 231 residues long: MAGLVDLKNEEEVKEYLDNLGTEYSYQCLKEKQPDGCNRLAEYLENIKKNFESAAQILKINCDQNEHSESCYKLGAYYVTGKGGLPVDLKAAYGCFLKSCNKGGKKSIDSCHNVGLLSHDGRVNDDKPDALKARDYYNKACDGNFAASCFNLSAIYLQGAPGIPKDMNMALHFSEKACSLGHMWGCANASRMYKLGDGVAKNDEKAESLKNKARDLHRMQQERTQQISFGE.

Sel1-like repeat units lie at residues 34–66 (PDGCNRLAEYLENIKKNFESAAQILKINCDQNE), 68–104 (SESCYKLGAYYVTGKGGLPVDLKAAYGCFLKSCNKGG), 108–145 (IDSCHNVGLLSHDGRVNDDKPDALKARDYYNKACDGNF), 146–182 (AASCFNLSAIYLQGAPGIPKDMNMALHFSEKACSLGH), and 183–218 (MWGCANASRMYKLGDGVAKNDEKAESLKNKARDLHR).

It belongs to the hcp beta-lactamase family.

It localises to the mitochondrion intermembrane space. Its function is as follows. May be required for assembly of mitochondrial respiratory chain complexes. The polypeptide is Cytochrome c oxidase assembly factor 7 (coa7) (Xenopus tropicalis (Western clawed frog)).